Reading from the N-terminus, the 127-residue chain is Fluoride-specific ion channel FluC (127 aa).

4 helical membrane-spanning segments follow: residues 4-24, 35-55, 71-91, and 101-121; these read LLCA…WLGM, IGTL…LAWF, TGFC…VFLL, and LNVM…FWLF. Residues glycine 75 and threonine 78 each contribute to the Na(+) site.

This sequence belongs to the fluoride channel Fluc/FEX (TC 1.A.43) family.

The protein localises to the cell inner membrane. It catalyses the reaction fluoride(in) = fluoride(out). Na(+) is not transported, but it plays an essential structural role and its presence is essential for fluoride channel function. Functionally, fluoride-specific ion channel. Important for reducing fluoride concentration in the cell, thus reducing its toxicity. The protein is Fluoride-specific ion channel FluC of Klebsiella pneumoniae (strain 342).